An 83-amino-acid polypeptide reads, in one-letter code: High-potential iron-sulfur protein (83 aa).

Residues Cys-43, Cys-46, Cys-61, and Cys-75 each contribute to the [4Fe-4S] cluster site.

The protein belongs to the high-potential iron-sulfur protein (HiPIP) family. As to quaternary structure, homodimer.

Its subcellular location is the periplasm. Its function is as follows. Specific class of high-redox-potential 4Fe-4S ferredoxins. Functions in anaerobic electron transport in most purple and in some other photosynthetic bacteria and in at least one genus (Paracoccus) of halophilic, denitrifying bacteria. In Isochromatium buderi (Chromatium buderi), this protein is High-potential iron-sulfur protein.